A 238-amino-acid polypeptide reads, in one-letter code: Small ribosomal subunit protein uS2c (238 aa).

It belongs to the universal ribosomal protein uS2 family.

Its subcellular location is the plastid. The protein localises to the chloroplast. In Jasminum nudiflorum (Winter jasmine), this protein is Small ribosomal subunit protein uS2c (rps2).